A 584-amino-acid chain; its full sequence is Sulfite reductase [NADPH] hemoprotein beta-component (584 aa).

[4Fe-4S] cluster is bound by residues C447, C453, C492, and C496. C496 serves as a coordination point for siroheme.

This sequence belongs to the nitrite and sulfite reductase 4Fe-4S domain family. As to quaternary structure, alpha(8)-beta(8). The alpha component is a flavoprotein, the beta component is a hemoprotein. Requires siroheme as cofactor. [4Fe-4S] cluster serves as cofactor.

It catalyses the reaction hydrogen sulfide + 3 NADP(+) + 3 H2O = sulfite + 3 NADPH + 4 H(+). The protein operates within sulfur metabolism; hydrogen sulfide biosynthesis; hydrogen sulfide from sulfite (NADPH route): step 1/1. Functionally, component of the sulfite reductase complex that catalyzes the 6-electron reduction of sulfite to sulfide. This is one of several activities required for the biosynthesis of L-cysteine from sulfate. The protein is Sulfite reductase [NADPH] hemoprotein beta-component of Colwellia psychrerythraea (strain 34H / ATCC BAA-681) (Vibrio psychroerythus).